The sequence spans 564 residues: 5-hydroxytryptamine receptor 1 (564 aa).

The tract at residues 1-26 is disordered; that stretch reads MALSGQDWRRHQSHRQHRNHRTQGNH. The span at 11–23 shows a compositional bias: basic residues; the sequence is HQSHRQHRNHRTQ. The helical transmembrane segment at 29-51 threads the bilayer; the sequence is LISTATLTLFVLFLSSWIAYAAG. A run of 9 repeats spans residues 89-90, 91-92, 93-94, 95-96, 97-98, 99-100, 101-102, 103-104, and 105-106. Residues 89–106 form a 9 X 2 AA tandem repeats of G-S region; that stretch reads GSGSGSGSGSGSGSGSGS. The helical transmembrane segment at 165 to 188 threads the bilayer; that stretch reads VSIVLLIVILGTVVGNVLVCIAVC. Over 189 to 198 the chain is Cytoplasmic; it reads MVRKLRRPCN. The chain crosses the membrane as a helical span at residues 199–222; that stretch reads YLLVSLALSDLCVALLVMPMALLY. Topologically, residues 223 to 236 are extracellular; the sequence is EVLEKWNFGPLLCD. Cys235 and Cys314 are joined by a disulfide. A helical membrane pass occupies residues 237-258; it reads IWVSFDVLCCTASILNLCAISV. An agonist binding region spans residues 238–247; the sequence is WVSFDVLCCT. 2 residues coordinate ergotamine: Asp242 and Thr247. The DRY motif; important for ligand-induced conformation changes signature appears at 259-261; it reads DRY. The Cytoplasmic segment spans residues 259–278; it reads DRYLAITKPLEYGVKRTPRR. Residues 279–302 traverse the membrane as a helical segment; the sequence is MMLCVGIVWLAAACISLPPLLILG. Topologically, residues 303 to 330 are extracellular; sequence NEHEDEEGQPICTVCQNFAYQIYATLGS. A helical transmembrane segment spans residues 331–353; it reads FYIPLSVMLFVYYQIFRAARRIV. The Cytoplasmic portion of the chain corresponds to 354 to 454; sequence LEEKRAQTHL…QLAKEKKAST (101 aa). A disordered region spans residues 367–396; sequence LNGTGSPSAPQAPPLGHTELASSGNGQRHS. The span at 386-396 shows a compositional bias: polar residues; sequence LASSGNGQRHS. Residues 455–476 form a helical membrane-spanning segment; it reads TLGIIMSAFTVCWLPFFILALI. Topologically, residues 477–487 are extracellular; it reads RPFETMHVPAS. The helical transmembrane segment at 488 to 510 threads the bilayer; that stretch reads LSSLFLWLGYANSLLNPIIYATL. The NPxxY motif; important for ligand-induced conformation changes and signaling motif lies at 503-507; that stretch reads NPIIY. Residues 511–564 lie on the Cytoplasmic side of the membrane; the sequence is NRDFRKPFQEILYFRCSSLNTMMRENYYQDQYGEPPSQRVMLGDERHGARESFL.

This sequence belongs to the G-protein coupled receptor 1 family. 5-hydroxytryptamine receptor subfamily. In terms of tissue distribution, expressed predominantly in adult heads.

Its subcellular location is the cell membrane. Functionally, G-protein coupled receptor for 5-hydroxytryptamine (serotonin). Also functions as a receptor for various alkaloids. Ligand binding causes a conformation change that triggers signaling via guanine nucleotide-binding proteins (G proteins) and modulates the activity of down-stream effectors, such as adenylate cyclase. Signaling activates adenylate cyclase activity. This Drosophila melanogaster (Fruit fly) protein is 5-hydroxytryptamine receptor 1 (5-HT7).